A 487-amino-acid polypeptide reads, in one-letter code: Glutamyl-tRNA(Gln) amidotransferase subunit A (487 aa).

Residues K79 and S158 each act as charge relay system in the active site. Catalysis depends on S182, which acts as the Acyl-ester intermediate.

This sequence belongs to the amidase family. GatA subfamily. Heterotrimer of A, B and C subunits.

It catalyses the reaction L-glutamyl-tRNA(Gln) + L-glutamine + ATP + H2O = L-glutaminyl-tRNA(Gln) + L-glutamate + ADP + phosphate + H(+). Functionally, allows the formation of correctly charged Gln-tRNA(Gln) through the transamidation of misacylated Glu-tRNA(Gln) in organisms which lack glutaminyl-tRNA synthetase. The reaction takes place in the presence of glutamine and ATP through an activated gamma-phospho-Glu-tRNA(Gln). The polypeptide is Glutamyl-tRNA(Gln) amidotransferase subunit A (Ehrlichia canis (strain Jake)).